A 185-amino-acid chain; its full sequence is Elongation factor P (185 aa).

Belongs to the elongation factor P family.

It localises to the cytoplasm. It participates in protein biosynthesis; polypeptide chain elongation. Involved in peptide bond synthesis. Stimulates efficient translation and peptide-bond synthesis on native or reconstituted 70S ribosomes in vitro. Probably functions indirectly by altering the affinity of the ribosome for aminoacyl-tRNA, thus increasing their reactivity as acceptors for peptidyl transferase. In Salinispora tropica (strain ATCC BAA-916 / DSM 44818 / JCM 13857 / NBRC 105044 / CNB-440), this protein is Elongation factor P.